The sequence spans 384 residues: MVPNANSNTVSLQSPNAIPPRTSSTGYITPFPPAKSVLRPVPESDWLGQNNTRNRSSSTTAIPLTGMHATGPQDPARYETEDLNYTSRKTWSEQKEKVLVGPFEYLFAHPGKDFRTLMVNSFNAWLEVPQESLDVITKVVGMLHTASLLVDDVEDNSLLRRGLPVAHSIFGTAQTINSANYVYFCALQELQKLKNPEAINVYTEELLNLHRGQGMDLFWRDTLTCPTEEEYLEMVGNKTGGLFRLAIKLMQAESGTPIDCVPLVNILGIIFQIQDDYRNLSSPEYGQNKGLCEDLTEGKFSFLIIHSIRSNPSNLQLLNILKQKTTDDEVKRYAVKYMEGTGSFEYTQKVISILVDRARKMTDELDNGRGKSVGIHKILDKLVV.

Disordered regions lie at residues 1-25 (MVPN…TSST) and 39-78 (RPVP…PARY). The segment covering 47–62 (LGQNNTRNRSSSTTAI) has biased composition (polar residues). Residues K112, R115, and H144 each contribute to the isopentenyl diphosphate site. 2 residues coordinate Mg(2+): D151 and D155. A dimethylallyl diphosphate-binding site is contributed by R160. R161 contacts isopentenyl diphosphate. K238, T239, and Q272 together coordinate dimethylallyl diphosphate. D275 serves as a coordination point for Mg(2+). 3 residues coordinate dimethylallyl diphosphate: N279, K289, and K299.

It belongs to the FPP/GGPP synthase family. It depends on Mg(2+) as a cofactor.

The catalysed reaction is isopentenyl diphosphate + dimethylallyl diphosphate = (2E)-geranyl diphosphate + diphosphate. It carries out the reaction isopentenyl diphosphate + (2E)-geranyl diphosphate = (2E,6E)-farnesyl diphosphate + diphosphate. It catalyses the reaction isopentenyl diphosphate + (2E,6E)-farnesyl diphosphate = (2E,6E,10E)-geranylgeranyl diphosphate + diphosphate. It participates in secondary metabolite biosynthesis. Catalyzes the trans-addition of the 3 molecules of isopentenyl diphosphate (IPP) onto dimethylallyl diphosphate (DMAPP) to form geranylgeranyl pyrophosphate (GGPP). GGPP is a precursor for the biosynthesis of many secondary metabolites, including the indole diterpenes nodulisporic acids (NA). This chain is Geranylgeranyl pyrophosphate synthase, found in Hypoxylon pulicicidum.